The sequence spans 298 residues: tRNA pseudouridine synthase A (298 aa).

Residue D56 is the Nucleophile of the active site. Y125 lines the substrate pocket.

The protein belongs to the tRNA pseudouridine synthase TruA family. In terms of assembly, homodimer.

It carries out the reaction uridine(38/39/40) in tRNA = pseudouridine(38/39/40) in tRNA. Formation of pseudouridine at positions 38, 39 and 40 in the anticodon stem and loop of transfer RNAs. The protein is tRNA pseudouridine synthase A of Bifidobacterium animalis subsp. lactis (strain AD011).